A 484-amino-acid polypeptide reads, in one-letter code: Catalase (484 aa).

A Methionine sulfone modification is found at Met-53. Active-site residues include His-54 and Asn-127. Tyr-337 serves as a coordination point for heme.

Homotetramer. Heme is required as a cofactor. It depends on NADP(+) as a cofactor.

Its subcellular location is the cytoplasm. It carries out the reaction 2 H2O2 = O2 + 2 H2O. Functionally, decomposes hydrogen peroxide into water and oxygen; serves to protect cells from the toxic effects of hydrogen peroxide. The chain is Catalase (katA) from Proteus mirabilis.